Here is a 222-residue protein sequence, read N- to C-terminus: Putative O-methyltransferase MAP_2558 (222 aa).

Residues valine 49, glutamate 71, 73 to 74 (GT), serine 79, aspartate 97, and isoleucine 98 each bind S-adenosyl-L-methionine. Aspartate 145 is a binding site for substrate. Residue aspartate 147 coordinates S-adenosyl-L-methionine.

This sequence belongs to the class I-like SAM-binding methyltransferase superfamily. Cation-dependent O-methyltransferase family.

In Mycolicibacterium paratuberculosis (strain ATCC BAA-968 / K-10) (Mycobacterium paratuberculosis), this protein is Putative O-methyltransferase MAP_2558.